The primary structure comprises 512 residues: 2,3-bisphosphoglycerate-independent phosphoglycerate mutase (512 aa).

Positions 13 and 63 each coordinate Mn(2+). Residue serine 63 is the Phosphoserine intermediate of the active site. Residues histidine 124, arginine 154–aspartate 155, arginine 186, arginine 192, arginine 262–arginine 265, and lysine 337 each bind substrate. The Mn(2+) site is built by aspartate 404, histidine 408, aspartate 445, histidine 446, and histidine 463.

This sequence belongs to the BPG-independent phosphoglycerate mutase family. As to quaternary structure, monomer. The cofactor is Mn(2+).

The catalysed reaction is (2R)-2-phosphoglycerate = (2R)-3-phosphoglycerate. It participates in carbohydrate degradation; glycolysis; pyruvate from D-glyceraldehyde 3-phosphate: step 3/5. Its function is as follows. Essential for rapid growth and for sporulation. Catalyzes the interconversion of 2-phosphoglycerate and 3-phosphoglycerate. This chain is 2,3-bisphosphoglycerate-independent phosphoglycerate mutase, found in Oceanobacillus iheyensis (strain DSM 14371 / CIP 107618 / JCM 11309 / KCTC 3954 / HTE831).